The chain runs to 475 residues: MLRWLRAFVLPTAACHDAEPPTRYETLFRALDRNGDGVVDIGELQQGLQSLGIPLGQDAEEKIFTTGDVNKDGKLDFEEFMKYLKDHEKKMKLAFKSLDKNNDGKIEPSEIVQSLQMLGLHISEKQAELILQSIDSDGTMTVDWNEWRDYFLFNPVTDIEEIIRFWKHSTGIDIGDSLTIPDEFTEDEKKSGQWWRQLLAGGVAGAVSRTSTAPLDRLKVMMQVHGSKSMNIFGGFRQMVKEGGIRSLWRGNGTNVIKIAPETAVKFWAYEQYKKLLTEEGQKLGTFERFISGSMAGATAQTFIYPMEVLKTRLAVAKTGQYSGIYGCAKKILKHEGFGAFYKGYIPNLLGIIPYAGIDLAVYELLKSYWLDNFAKDSVNPGVMVLLSCGALSSTCGQLASYPLALVRTRMQAQATVEGAPQLSMVGLFQRIVSKEGVSGLYRGITPNFMKVLPAVGISYVVYENMKQTLGVAQK.

The segment at 1–173 is regulatory N-terminal domain; the sequence is MLRWLRAFVL…RFWKHSTGID (173 aa). At 1–197 the chain is on the mitochondrial intermembrane side; it reads MLRWLRAFVL…EKKSGQWWRQ (197 aa). EF-hand domains follow at residues 19 to 54, 55 to 88, 86 to 121, and 122 to 157; these read EPPTRYETLFRALDRNGDGVVDIGELQQGLQSLGIP, LGQDAEEKIFTTGDVNKDGKLDFEEFMKYLKDHE, DHEKKMKLAFKSLDKNNDGKIEPSEIVQSLQMLGLH, and ISEKQAELILQSIDSDGTMTVDWNEWRDYFLFNPVT. The Ca(2+) site is built by Asp-32, Asn-34, Asp-36, Val-38, Glu-43, Asp-68, Asn-70, Asp-72, Lys-74, Glu-79, Asp-99, Asn-101, Asp-103, Lys-105, Glu-110, Asp-135, Asp-137, Thr-139, Thr-141, and Glu-146. Residues 159–168 are linker region; it reads IEEIIRFWKH. The tract at residues 174–475 is C-terminal transmembrane transporter domain; it reads IGDSLTIPDE…MKQTLGVAQK (302 aa). Solcar repeat units follow at residues 192-276, 284-369, and 381-469; these read GQWW…YKKL, LGTF…LKSY, and PGVM…MKQT. A helical transmembrane segment spans residues 198–215; the sequence is LLAGGVAGAVSRTSTAPL. Residues 216 to 250 lie on the Mitochondrial matrix side of the membrane; sequence DRLKVMMQVHGSKSMNIFGGFRQMVKEGGIRSLWR. A helical membrane pass occupies residues 251 to 270; the sequence is GNGTNVIKIAPETAVKFWAY. The Mitochondrial intermembrane portion of the chain corresponds to 271–293; that stretch reads EQYKKLLTEEGQKLGTFERFISG. The helical transmembrane segment at 294-307 threads the bilayer; it reads SMAGATAQTFIYPM. The Mitochondrial matrix portion of the chain corresponds to 308 to 343; sequence EVLKTRLAVAKTGQYSGIYGCAKKILKHEGFGAFYK. Lys-318 is subject to N6-acetyllysine; alternate. Position 318 is an N6-succinyllysine; alternate (Lys-318). At Lys-334 the chain carries N6-acetyllysine. A helical membrane pass occupies residues 344–363; the sequence is GYIPNLLGIIPYAGIDLAVY. Over 364–386 the chain is Mitochondrial intermembrane; it reads ELLKSYWLDNFAKDSVNPGVMVL. A helical membrane pass occupies residues 387-404; that stretch reads LSCGALSSTCGQLASYPL. The Mitochondrial matrix portion of the chain corresponds to 405–443; sequence ALVRTRMQAQATVEGAPQLSMVGLFQRIVSKEGVSGLYR. Lys-435 is subject to N6-acetyllysine; alternate. Lys-435 carries the post-translational modification N6-succinyllysine; alternate. Residues 444 to 463 traverse the membrane as a helical segment; sequence GITPNFMKVLPAVGISYVVY. The Mitochondrial intermembrane segment spans residues 464-475; that stretch reads ENMKQTLGVAQK.

This sequence belongs to the mitochondrial carrier (TC 2.A.29) family. As to quaternary structure, monomer.

The protein localises to the mitochondrion inner membrane. The catalysed reaction is Mg(2+)(out) + phosphate(in) + ATP(out) = Mg(2+)(in) + phosphate(out) + ATP(in). It carries out the reaction ADP(out) + phosphate(in) + H(+)(out) = ADP(in) + phosphate(out) + H(+)(in). The enzyme catalyses AMP(out) + phosphate(in) = AMP(in) + phosphate(out). It catalyses the reaction phosphate(in) + ATP(out) + 2 H(+)(out) = phosphate(out) + ATP(in) + 2 H(+)(in). The catalysed reaction is dADP(in) + ADP(out) = dADP(out) + ADP(in). It carries out the reaction Mg(2+)(in) + ADP(out) + ATP(in) + H(+)(out) = Mg(2+)(out) + ADP(in) + ATP(out) + H(+)(in). The enzyme catalyses ADP(out) + diphosphate(in) = ADP(in) + diphosphate(out). It catalyses the reaction dAMP(in) + ADP(out) + H(+)(out) = dAMP(out) + ADP(in) + H(+)(in). The catalysed reaction is 3'-AMP(in) + ADP(out) + H(+)(out) = 3'-AMP(out) + ADP(in) + H(+)(in). It carries out the reaction dAMP(out) + phosphate(in) = dAMP(in) + phosphate(out). The enzyme catalyses 3'-AMP(out) + phosphate(in) = 3'-AMP(in) + phosphate(out). It catalyses the reaction dADP(out) + phosphate(in) + H(+)(out) = dADP(in) + phosphate(out) + H(+)(in). Its activity is regulated as follows. Activated by an increase in cytosolic calcium levels that induce a conformational change of the N-terminal regulatory domain, uncapping the channel and allowing transport. Inhibited by bathophenanthroline, mersalyl, p-hydroxymercuribenzoate, bromcresol purple and tannic acid. Functionally, electroneutral antiporter that mediates the transport of adenyl nucleotides through the inner mitochondrial membrane. Originally identified as an ATP-magnesium/inorganic phosphate antiporter, it also acts as a broad specificity adenyl nucleotide antiporter. By regulating the mitochondrial matrix adenyl nucleotide pool could adapt to changing cellular energetic demands and indirectly regulate adenyl nucleotide-dependent metabolic pathways. In vitro, a low activity is also observed with guanyl and pyrimidine nucleotides. May play a role in protecting cells against oxidative stress-induced cell death, by buffering calcium levels in the mitochondrial matrix through the formation of calcium-phosphate precipitates. The sequence is that of Mitochondrial adenyl nucleotide antiporter SLC25A24 from Mus musculus (Mouse).